Consider the following 383-residue polypeptide: UPF0425 pyridoxal phosphate-dependent protein Msp_0916 (383 aa).

The residue at position 207 (K207) is an N6-(pyridoxal phosphate)lysine.

Belongs to the UPF0425 family. Pyridoxal 5'-phosphate is required as a cofactor.

The protein is UPF0425 pyridoxal phosphate-dependent protein Msp_0916 of Methanosphaera stadtmanae (strain ATCC 43021 / DSM 3091 / JCM 11832 / MCB-3).